Reading from the N-terminus, the 313-residue chain is Ribosomal RNA small subunit methyltransferase H (313 aa).

S-adenosyl-L-methionine is bound by residues 37 to 39 (GGH), aspartate 57, phenylalanine 83, aspartate 104, and glutamine 111.

Belongs to the methyltransferase superfamily. RsmH family.

Its subcellular location is the cytoplasm. The enzyme catalyses cytidine(1402) in 16S rRNA + S-adenosyl-L-methionine = N(4)-methylcytidine(1402) in 16S rRNA + S-adenosyl-L-homocysteine + H(+). Functionally, specifically methylates the N4 position of cytidine in position 1402 (C1402) of 16S rRNA. The sequence is that of Ribosomal RNA small subunit methyltransferase H from Mycoplasmoides gallisepticum (strain R(low / passage 15 / clone 2)) (Mycoplasma gallisepticum).